We begin with the raw amino-acid sequence, 128 residues long: Small ribosomal subunit protein eS8 (128 aa).

The interval 1 to 41 (MSYYQGNDSRKITGGQKGKNRDKRKYELGSPPTETKISDKD) is disordered.

This sequence belongs to the eukaryotic ribosomal protein eS8 family. Part of the 30S ribosomal subunit.

The protein is Small ribosomal subunit protein eS8 of Sulfolobus acidocaldarius (strain ATCC 33909 / DSM 639 / JCM 8929 / NBRC 15157 / NCIMB 11770).